An 871-amino-acid chain; its full sequence is Patatin-like phospholipase domain-containing protein CNBE2340 (871 aa).

Residues 20 to 53 form a disordered region; the sequence is NEDSPLSPRSFSLPPESPQLSTASPIHQRVSRKR. The segment covering 23 to 33 has biased composition (low complexity); sequence SPLSPRSFSLP. A helical transmembrane segment spans residues 68 to 88; the sequence is WPLLFFIFFIIYLEFSAYVIT. Residues 243–435 enclose the PNPLA domain; that stretch reads LCLSGGASFG…REDIPLGSLH (193 aa). The short motif at 274-278 is the GXSXG element; the sequence is GTSAG. Catalysis depends on S276, which acts as the Nucleophile. Residue D422 is the Proton acceptor of the active site. 3 disordered regions span residues 586–707, 720–748, and 760–871; these read ALSH…NFGD, LSSP…QRFR, and VSES…QDGA. 2 stretches are compositionally biased toward polar residues: residues 594–606 and 687–706; these read NDPA…TNPE and PTHS…SNFG. Positions 721–748 are enriched in low complexity; the sequence is SSPFRSIRSNTSSSSNNVQSPSSSQRFR. Residues 798–820 are compositionally biased toward basic and acidic residues; the sequence is VESHSDRSEDEMLHSGANVKEEY.

The protein belongs to the PLPL family.

The protein resides in the membrane. Probable lipid hydrolase. This Cryptococcus neoformans var. neoformans serotype D (strain B-3501A) (Filobasidiella neoformans) protein is Patatin-like phospholipase domain-containing protein CNBE2340.